The sequence spans 65 residues: Large ribosomal subunit protein bL35 (65 aa).

Composition is skewed to basic residues over residues 1–18 (MPKMKTKSAAAKRFKRTA), 31–44 (HRFHGKTKKQRRQL), and 55–65 (VKRYKKMIPAK). Residues 1-65 (MPKMKTKSAA…KRYKKMIPAK (65 aa)) are disordered.

This sequence belongs to the bacterial ribosomal protein bL35 family.

This chain is Large ribosomal subunit protein bL35, found in Limosilactobacillus fermentum (strain NBRC 3956 / LMG 18251) (Lactobacillus fermentum).